Here is a 488-residue protein sequence, read N- to C-terminus: Glutamate--tRNA ligase (488 aa).

Positions P8 to G18 match the 'HIGH' region motif. Zn(2+) is bound by residues C105, C107, C132, and H134. Residues K249–R253 carry the 'KMSKS' region motif. Residue K252 coordinates ATP.

The protein belongs to the class-I aminoacyl-tRNA synthetase family. Glutamate--tRNA ligase type 1 subfamily. As to quaternary structure, monomer. Zn(2+) is required as a cofactor.

Its subcellular location is the cytoplasm. It carries out the reaction tRNA(Glu) + L-glutamate + ATP = L-glutamyl-tRNA(Glu) + AMP + diphosphate. Its function is as follows. Catalyzes the attachment of glutamate to tRNA(Glu) in a two-step reaction: glutamate is first activated by ATP to form Glu-AMP and then transferred to the acceptor end of tRNA(Glu). The polypeptide is Glutamate--tRNA ligase (Desulfitobacterium hafniense (strain Y51)).